We begin with the raw amino-acid sequence, 1180 residues long: MVPRRPASLEVTVACIWLLTVILGFCVSFNVDVKNSMSFSGPVEDMFGYTVQQYENEEGKWVLIGSPLVGQPKARTGDVYKCPVGRERAMPCVKLDLPVNTSIPNVTEIKENMTFGSTLVTNPNGGFLACGPLYAYRCGHLHYTTGICSDVSPTFQVVNSFAPVQECSTQLDIVIVLDGSNSIYPWESVIAFLNDLLKRMDIGPKQTQVGIVQYGENVTHEFNLNKYSSTEEVLVAANKIGRQGGLQTMTALGIDTARKEAFTEARGARRGVKKVMVIVTDGESHDNYRLKQVIQDCEDENIQRFSIAILGHYNRGNLSTEKFVEEIKSIASEPTEKHFFNVSDELALVTIVKALGERIFALEATADQSAASFEMEMSQTGFSAHYSQDWVMLGAVGAYDWNGTVVMQKANQMVIPHNTTFQTEPAKMNEPLASYLGYTVNSATIPGDVLYIAGQPRYNHTGQVVIYKMEDGNINILQTLGGEQIGSYFGSVLTTIDIDKDSYTDLLLVGAPMYMGTEKEEQGKVYVYAVNQTRFEYQMSLEPIRQTCCSSLKDNSCTKENKNEPCGARFGTAIAAVKDLNVDGFNDVVIGAPLEDDHAGAVYIYHGSGKTIREAYAQRIPSGGDGKTLKFFGQSIHGEMDLNGDGLTDVTIGGLGGAALFWARDVAVVKVTMNFEPNKVNIQKKNCRVEGKETVCINATMCFHVKLKSKEDSIYEADLQYRVTLDSLRQISRSFFSGTQERKIQRNITVRESECIRHSFYMLDKHDFQDSVRVTLDFNLTDPENGPVLDDALPNSVHEHIPFAKDCGNKERCISDLTLNVSTTEKSLLIVKSQHDKFNVSLTVKNKGDSAYNTRTVVQHSPNLIFSGIEEIQKDSCESNQNITCRVGYPFLRAGETVTFKIIFQFNTSHLSENAIIHLSATSDSEEPLESLNDNEVNISIPVKYEVGLQFYSSASEHHISVAANETIPEFINSTEDIGNEINVFYTIRKRGHFPMPELQLSISFPNLTADGYPVLYPIGWSSSDNVNCRPRSLEDPFGINSGKKMTISKSEVLKRGTIQDCSSTCGVATITCSLLPSDLSQVNVSLLLWKPTFIRAHFSSLNLTLRGELKSENSSLTLSSSNRKRELAIQISKDGLPGRVPLWVILLSAFAGLLLLMLLILALWKIGFFKRPLKKKMEK.

A signal peptide spans methionine 1–serine 28. Residues phenylalanine 29 to proline 1142 lie on the Extracellular side of the membrane. Residues asparagine 30–proline 91 form an FG-GAP 1 repeat. The cysteines at positions 82 and 92 are disulfide-linked. Asparagine 100, asparagine 105, asparagine 112, asparagine 217, asparagine 317, asparagine 341, asparagine 402, asparagine 418, and asparagine 459 each carry an N-linked (GlcNAc...) asparagine glycan. Residues threonine 101–serine 160 form an FG-GAP 2 repeat. In terms of domain architecture, VWFA spans isoleucine 175–alanine 364. Residues threonine 365 to histidine 417 form an FG-GAP 3 repeat. FG-GAP repeat units lie at residues glutamine 422–isoleucine 474, asparagine 475–tyrosine 537, serine 556–glutamate 614, and glutamine 618–asparagine 678. Aspartate 497, aspartate 499, aspartate 501, and aspartate 505 together coordinate Ca(2+). N-linked (GlcNAc...) asparagine glycosylation is present at asparagine 531. Positions 579, 581, 583, 587, 641, 643, 645, and 649 each coordinate Ca(2+). Cysteine 687 and cysteine 696 are oxidised to a cystine. Asparagine 698, asparagine 747, and asparagine 779 each carry an N-linked (GlcNAc...) asparagine glycan. Cysteine 702 and cysteine 755 are oxidised to a cystine. The cysteines at positions 807 and 813 are disulfide-linked. N-linked (GlcNAc...) asparagine glycans are attached at residues asparagine 820, asparagine 839, asparagine 882, asparagine 907, asparagine 938, asparagine 965, asparagine 973, and asparagine 1007. Cysteine 877 and cysteine 885 are disulfide-bonded. 2 disulfide bridges follow: cysteine 1029–cysteine 1062 and cysteine 1066–cysteine 1073. Asparagine 1084, asparagine 1103, and asparagine 1114 each carry an N-linked (GlcNAc...) asparagine glycan. Residues leucine 1143–tryptophan 1165 traverse the membrane as a helical segment. The Cytoplasmic portion of the chain corresponds to lysine 1166 to lysine 1180. The GFFKR motif signature appears at glycine 1168–arginine 1172.

This sequence belongs to the integrin alpha chain family. As to quaternary structure, heterodimer of an alpha and a beta subunit. Alpha-1 associates with beta-1. Interacts with RAB21. Interacts (via cytoplasmic domain) with PTPN2; activates PTPN2 phosphatase activity towards EGFR and negatively regulates EGF signaling.

It is found in the membrane. Its function is as follows. Integrin alpha-1/beta-1 is a receptor for laminin and collagen. It recognizes the proline-hydroxylated sequence G-F-P-G-E-R in collagen. Involved in anchorage-dependent, negative regulation of EGF-stimulated cell growth. The sequence is that of Integrin alpha-1 (Itga1) from Rattus norvegicus (Rat).